Reading from the N-terminus, the 504-residue chain is Glycerol kinase (504 aa).

Threonine 12 contacts ADP. ATP contacts are provided by threonine 12, threonine 13, and serine 14. Residue threonine 12 participates in sn-glycerol 3-phosphate binding. ADP is bound at residue arginine 16. Residues arginine 82, glutamate 83, tyrosine 134, and aspartate 246 each coordinate sn-glycerol 3-phosphate. Glycerol contacts are provided by arginine 82, glutamate 83, tyrosine 134, aspartate 246, and glutamine 247. The ADP site is built by threonine 268 and glycine 312. The ATP site is built by threonine 268, glycine 312, glutamine 316, and glycine 413. Residues glycine 413 and asparagine 417 each coordinate ADP.

Belongs to the FGGY kinase family.

The catalysed reaction is glycerol + ATP = sn-glycerol 3-phosphate + ADP + H(+). It participates in polyol metabolism; glycerol degradation via glycerol kinase pathway; sn-glycerol 3-phosphate from glycerol: step 1/1. Inhibited by fructose 1,6-bisphosphate (FBP). Key enzyme in the regulation of glycerol uptake and metabolism. Catalyzes the phosphorylation of glycerol to yield sn-glycerol 3-phosphate. The protein is Glycerol kinase of Renibacterium salmoninarum (strain ATCC 33209 / DSM 20767 / JCM 11484 / NBRC 15589 / NCIMB 2235).